A 137-amino-acid polypeptide reads, in one-letter code: MSKTFIMIKPDGVKNKHVGNILARIEKEGFKILGLKYLKLSLEDAKQFYKVHSARPFYSDLCNYMSSGPIVAAALERDNAVLHWREVIGATDPKEAAAGTIRALYAESKEANAVHGSDSDENAALEVSFFFKGNELF.

Residues Lys9, Phe57, Arg85, Thr91, Arg102, and Asn112 each contribute to the ATP site. The active-site Pros-phosphohistidine intermediate is His115.

Belongs to the NDK family. In terms of assembly, homotetramer. It depends on Mg(2+) as a cofactor.

The protein localises to the cytoplasm. The enzyme catalyses a 2'-deoxyribonucleoside 5'-diphosphate + ATP = a 2'-deoxyribonucleoside 5'-triphosphate + ADP. It carries out the reaction a ribonucleoside 5'-diphosphate + ATP = a ribonucleoside 5'-triphosphate + ADP. Its function is as follows. Major role in the synthesis of nucleoside triphosphates other than ATP. The ATP gamma phosphate is transferred to the NDP beta phosphate via a ping-pong mechanism, using a phosphorylated active-site intermediate. The polypeptide is Nucleoside diphosphate kinase (Leptospira borgpetersenii serovar Hardjo-bovis (strain L550)).